The primary structure comprises 405 residues: Elongation factor Tu (405 aa).

Positions 10-215 (KPHVNIGTIG…AVDSYIPTPE (206 aa)) constitute a tr-type G domain. The G1 stretch occupies residues 19-26 (GHVDHGKT). 19–26 (GHVDHGKT) contacts GTP. Thr-26 contributes to the Mg(2+) binding site. The interval 61–65 (GITIN) is G2. The tract at residues 82 to 85 (DCPG) is G3. GTP-binding positions include 82-86 (DCPGH) and 137-140 (NKVD). The G4 stretch occupies residues 137-140 (NKVD). The interval 175-177 (SAL) is G5.

Belongs to the TRAFAC class translation factor GTPase superfamily. Classic translation factor GTPase family. EF-Tu/EF-1A subfamily. In terms of assembly, monomer.

It is found in the cytoplasm. It carries out the reaction GTP + H2O = GDP + phosphate + H(+). In terms of biological role, GTP hydrolase that promotes the GTP-dependent binding of aminoacyl-tRNA to the A-site of ribosomes during protein biosynthesis. The chain is Elongation factor Tu from Deinococcus radiodurans (strain ATCC 13939 / DSM 20539 / JCM 16871 / CCUG 27074 / LMG 4051 / NBRC 15346 / NCIMB 9279 / VKM B-1422 / R1).